Reading from the N-terminus, the 162-residue chain is SCF ubiquitin ligase complex protein SKP1a (162 aa).

Serine 2 is modified (N-acetylserine). The interaction with the F-box domain of F-box proteins stretch occupies residues 100–162; the sequence is ILAANYLDIK…NEWCEDKGGN (63 aa). Proline 143 is subject to 4-hydroxyproline. Residue proline 143 is glycosylated (O-linked (GlcNAc...) hydroxyproline).

This sequence belongs to the SKP1 family. In terms of assembly, multiprotein complex (SCF) with cullin and F-box-containing protein. Capable of undergoing aggregation. In terms of processing, O-linked glycan consists of linear Gal-Gal-Fuc-Gal-GlcNAc. Post-translationally, fpaA and fpaB seem to be identically glycosylated. Glycosylation is required for nuclear enrichment. Hydroxylated by phyA.

The protein localises to the cytoplasm. Its subcellular location is the nucleus. This chain is SCF ubiquitin ligase complex protein SKP1a (fpaA), found in Dictyostelium discoideum (Social amoeba).